A 308-amino-acid chain; its full sequence is Elongation factor Ts (308 aa).

The tract at residues 80–83 (TDFV) is involved in Mg(2+) ion dislocation from EF-Tu.

The protein belongs to the EF-Ts family.

The protein localises to the cytoplasm. In terms of biological role, associates with the EF-Tu.GDP complex and induces the exchange of GDP to GTP. It remains bound to the aminoacyl-tRNA.EF-Tu.GTP complex up to the GTP hydrolysis stage on the ribosome. The polypeptide is Elongation factor Ts (Rhodopseudomonas palustris (strain BisB5)).